The chain runs to 111 residues: UPF0060 membrane protein Cbei_2176 (111 aa).

The next 4 membrane-spanning stretches (helical) occupy residues 7–27 (ILYF…IWIW), 33–53 (SYLY…IPTL), 60–80 (FGKV…LWGW), and 85–105 (IVPD…VIVI).

It belongs to the UPF0060 family.

The protein localises to the cell membrane. This is UPF0060 membrane protein Cbei_2176 from Clostridium beijerinckii (strain ATCC 51743 / NCIMB 8052) (Clostridium acetobutylicum).